The following is a 353-amino-acid chain: Phosphate acyltransferase (353 aa).

Belongs to the PlsX family. As to quaternary structure, homodimer. Probably interacts with PlsY.

It is found in the cytoplasm. It carries out the reaction a fatty acyl-[ACP] + phosphate = an acyl phosphate + holo-[ACP]. It participates in lipid metabolism; phospholipid metabolism. Catalyzes the reversible formation of acyl-phosphate (acyl-PO(4)) from acyl-[acyl-carrier-protein] (acyl-ACP). This enzyme utilizes acyl-ACP as fatty acyl donor, but not acyl-CoA. In Bradyrhizobium sp. (strain BTAi1 / ATCC BAA-1182), this protein is Phosphate acyltransferase.